The primary structure comprises 315 residues: Methionyl-tRNA formyltransferase (315 aa).

An N-terminal domain region spans residues 2 to 189 (SESLRIIFAG…LITTLKQLAD (188 aa)). Residue 113 to 116 (SLLP) coordinates (6S)-5,6,7,8-tetrahydrofolate. The tract at residues 210 to 315 (KEEARIDWSL…EWFVPGNRLA (106 aa)) is C-terminal domain.

It belongs to the Fmt family.

The catalysed reaction is L-methionyl-tRNA(fMet) + (6R)-10-formyltetrahydrofolate = N-formyl-L-methionyl-tRNA(fMet) + (6S)-5,6,7,8-tetrahydrofolate + H(+). Attaches a formyl group to the free amino group of methionyl-tRNA(fMet). The formyl group appears to play a dual role in the initiator identity of N-formylmethionyl-tRNA by promoting its recognition by IF2 and preventing the misappropriation of this tRNA by the elongation apparatus. This chain is Methionyl-tRNA formyltransferase, found in Escherichia coli O6:H1 (strain CFT073 / ATCC 700928 / UPEC).